A 356-amino-acid chain; its full sequence is Dihydroorotate dehydrogenase (quinone) (356 aa).

Residues 67–71 (AGFDK) and Thr91 each bind FMN. Position 71 (Lys71) interacts with substrate. 116–120 (NRMGF) is a substrate binding site. Asn153 and Asn186 together coordinate FMN. Asn186 is a substrate binding site. Ser189 (nucleophile) is an active-site residue. Asn191 contacts substrate. Residues Lys228 and Thr256 each coordinate FMN. 257–258 (NT) contributes to the substrate binding site. FMN-binding positions include Gly282, Gly311, and 332 to 333 (YT).

This sequence belongs to the dihydroorotate dehydrogenase family. Type 2 subfamily. In terms of assembly, monomer. FMN serves as cofactor.

Its subcellular location is the cell membrane. The enzyme catalyses (S)-dihydroorotate + a quinone = orotate + a quinol. It functions in the pathway pyrimidine metabolism; UMP biosynthesis via de novo pathway; orotate from (S)-dihydroorotate (quinone route): step 1/1. Its function is as follows. Catalyzes the conversion of dihydroorotate to orotate with quinone as electron acceptor. In Pseudarthrobacter chlorophenolicus (strain ATCC 700700 / DSM 12829 / CIP 107037 / JCM 12360 / KCTC 9906 / NCIMB 13794 / A6) (Arthrobacter chlorophenolicus), this protein is Dihydroorotate dehydrogenase (quinone).